A 412-amino-acid chain; its full sequence is Transcription factor NIGT1 (412 aa).

Disordered stretches follow at residues 54 to 241, 286 to 310, and 358 to 412; these read MDAA…RCWA, KYRL…PAPP, and AMLP…TTSA. Positions 90 to 112 are enriched in basic and acidic residues; it reads ESTHADAAKSGKKEEAETSERHS. Low complexity predominate over residues 183-193; it reads ASSTTAAASST. Positions 198 to 228 are enriched in basic and acidic residues; sequence SGDKPTDDDTEKHMETDKDNDKDAKDKDKEG. Positions 232–292 constitute an HTH myb-type domain; it reads PHRKPRRCWA…HLQKYRLHTR (61 aa). The segment at residues 263–288 is a DNA-binding region (H-T-H motif); the sequence is PKQIRELMKVDGLTNDEVKSHLQKYR. The segment covering 383 to 392 has biased composition (basic and acidic residues); it reads SGSEGRRSGD. Residues 395–412 show a composition bias toward low complexity; the sequence is DGSSSSPAVSSSSQTTSA.

It localises to the nucleus. In terms of biological role, transcriptional repressor that may play a role in response to nitrogen. May be involved in a time-dependent signaling for transcriptional regulation of nitrate-responsive genes. Binds specifically to the DNA sequence motif 5'-GAATC-3' or 5'-GAATATTC-3'. Represses the activity of its own promoter trough binding to these motifs. The chain is Transcription factor NIGT1 from Oryza sativa subsp. japonica (Rice).